The following is a 79-amino-acid chain: Calcium/calmodulin-dependent protein kinase II inhibitor 2 (79 aa).

Positions 1 to 21 (MSEILPYSEDKMGRFGADPEG) are disordered. Residues 43–69 (KRPPKLGQIGRAKRVVIEDDRIDDVLK) are inhibitory domain.

Belongs to the CAMK2N family. As to quaternary structure, interacts with CAMK2A and CAMK2B in the presence of Ca(2+)/calmodulin or after autophosphorylation.

Its subcellular location is the nucleus. It localises to the cytoplasm. It is found in the cytosol. The protein localises to the synapse. Its function is as follows. Potent and specific cellular inhibitor of CaM-kinase II (CAMK2). Traps Ca(2+)/calmodulin on CAMK2. The sequence is that of Calcium/calmodulin-dependent protein kinase II inhibitor 2 (CAMK2N2) from Bos taurus (Bovine).